Reading from the N-terminus, the 216-residue chain is Imidazole glycerol phosphate synthase subunit HisH (216 aa).

The region spanning 2 to 216 (RVAIIDYGSG…LIANFLKWKP (215 aa)) is the Glutamine amidotransferase type-1 domain. Residue C88 is the Nucleophile of the active site. Residues H196 and E198 contribute to the active site.

In terms of assembly, heterodimer of HisH and HisF.

The protein resides in the cytoplasm. The enzyme catalyses 5-[(5-phospho-1-deoxy-D-ribulos-1-ylimino)methylamino]-1-(5-phospho-beta-D-ribosyl)imidazole-4-carboxamide + L-glutamine = D-erythro-1-(imidazol-4-yl)glycerol 3-phosphate + 5-amino-1-(5-phospho-beta-D-ribosyl)imidazole-4-carboxamide + L-glutamate + H(+). The catalysed reaction is L-glutamine + H2O = L-glutamate + NH4(+). It participates in amino-acid biosynthesis; L-histidine biosynthesis; L-histidine from 5-phospho-alpha-D-ribose 1-diphosphate: step 5/9. IGPS catalyzes the conversion of PRFAR and glutamine to IGP, AICAR and glutamate. The HisH subunit catalyzes the hydrolysis of glutamine to glutamate and ammonia as part of the synthesis of IGP and AICAR. The resulting ammonia molecule is channeled to the active site of HisF. The chain is Imidazole glycerol phosphate synthase subunit HisH from Brucella suis biovar 1 (strain 1330).